The following is a 237-amino-acid chain: Uridylate kinase (237 aa).

An ATP-binding site is contributed by 11-14 (KLSG). Gly-53 lines the UMP pocket. The ATP site is built by Gly-54 and Arg-58. Residues Asp-73 and 134–141 (TGNPFFTT) each bind UMP. Residues Thr-161, Tyr-167, and Asp-170 each coordinate ATP.

This sequence belongs to the UMP kinase family. In terms of assembly, homohexamer.

The protein localises to the cytoplasm. It catalyses the reaction UMP + ATP = UDP + ADP. It participates in pyrimidine metabolism; CTP biosynthesis via de novo pathway; UDP from UMP (UMPK route): step 1/1. With respect to regulation, inhibited by UTP. Catalyzes the reversible phosphorylation of UMP to UDP. The sequence is that of Uridylate kinase from Burkholderia cenocepacia (strain HI2424).